The following is a 2278-amino-acid chain: 1-phosphatidylinositol 3-phosphate 5-kinase FAB1 (2278 aa).

Disordered stretches follow at residues 1–30 and 76–144; these read MSSE…SVNT and PPTS…LQLP. An N-acetylserine modification is found at S2. The tract at residues 2-676 is required for localization to the vacuole membrane; it reads SSEEPHASIS…NSTKSFQRAQ (675 aa). Low complexity-rich tracts occupy residues 18–28 and 76–89; these read VRSSSTGTSSV and PPTS…TSTS. Positions 90 to 128 are enriched in polar residues; that stretch reads HVTGTASHSNIKANANTSTSVNKKNLPPTTSGRIPSSTI. The residue at position 186 (S186) is a Phosphoserine. The FYVE-type zinc-finger motif lies at 240–299; the sequence is DESSKECFSCGKTFNTFRRKHHCRICGQIFCSSCTLLIDGDRFGCHAKMRVCYNCYEHAD. Zn(2+) is bound by residues C246, C249, C262, C265, C270, C273, C291, and C294. Disordered regions lie at residues 302–337, 472–500, 514–534, 556–697, and 727–766; these read EDSS…HSHS, ITIN…NNPA, NSVN…AQSS, FNYN…PNNS, and DSSP…NINT. Low complexity predominate over residues 472–498; sequence ITINNLNNTTSNNSNYNNTNSNSNINN. Residues 557 to 570 show a composition bias toward polar residues; sequence NYNSKGPSQQNDTA. The segment covering 571-601 has biased composition (low complexity); sequence NGNNDNNNNNNNNNNNNNNNSASGIADNNNI. Polar residues predominate over residues 602-611; sequence PSNDNGTTFT. The segment covering 634-644 has biased composition (acidic residues); the sequence is LNEEDSSEDEG. The segment covering 665–679 has biased composition (polar residues); it reads MRNSTKSFQRAQASL. Residues 682–692 are compositionally biased toward basic residues; it reads MRFRRKSKSKH. A compositionally biased stretch (polar residues) spans 729 to 741; it reads SPLQDKASSSAAS. Residues 749-763 show a composition bias toward low complexity; it reads SNSSGSNNNSNSNSN. Residues 766-1039 are CCT domain; it reads TDPWKRIASI…KIKQVSEFMV (274 aa). The segment at 1181–1500 is CCR domain; sequence SSSQNLLGTG…TAKQLKKLFY (320 aa). Over residues 1506–1554 the composition is skewed to basic and acidic residues; it reads DSEDKKSLHDEKAKTRKPEKNELPLEGLKDVEKPKIDSKNTTENRDRTN. The segment at 1506-1627 is disordered; sequence DSEDKKSLHD…TRPNIRKMSS (122 aa). Positions 1555 to 1564 are enriched in polar residues; it reads EPQNAVTITT. A compositionally biased stretch (low complexity) spans 1580-1595; it reads LTVTPSASSVSSSLTP. S1627 and S1630 each carry phosphoserine. Polar residues predominate over residues 1766–1776; it reads SGKTTASTHLN. Disordered stretches follow at residues 1766 to 1804 and 1891 to 1972; these read SGKT…EPLP and QQQQ…THSQ. Residues 1780–1799 show a composition bias toward basic and acidic residues; sequence VVKETSENPKSIVRESDNSK. Residues 1918 to 1932 are compositionally biased toward polar residues; the sequence is DPSVNISPSVSTTSH. The PIPK domain occupies 1932-2266; that stretch reads HNKGRDSEIS…RFREAMERYI (335 aa). At S1938 the chain carries Phosphoserine. T1953 carries the phosphothreonine modification.

In terms of assembly, component of the PI(3,5)P2 regulatory complex, composed of ATG18, FIG4, FAB1, VAC14 and VAC7. VAC14 nucleates the assembly of the complex and serves as a scaffold. It depends on Mg(2+) as a cofactor. Mn(2+) is required as a cofactor.

Its subcellular location is the vacuole membrane. It localises to the endosome membrane. It carries out the reaction a 1,2-diacyl-sn-glycero-3-phospho-(1D-myo-inositol-3-phosphate) + ATP = a 1,2-diacyl-sn-glycero-3-phospho-(1D-myo-inositol-3,5-bisphosphate) + ADP + H(+). It catalyses the reaction 1,2-dihexadecanoyl-sn-glycero-3-phospho-(1D-myo-inositol-3-phosphate) + ATP = 1,2-dihexadecanoyl-sn-glycero-3-phospho-(1D-myo-inositol-3,5-phosphate) + ADP + H(+). Its activity is regulated as follows. Activated by VAC14 and VAC7. VAC14 acts as a specific osmotic response regulator. The PI(3,5)P2 regulatory complex regulates both the synthesis and turnover of phosphatidylinositol 3,5-bisphosphate (PtdIns(3,5)P2). Catalyzes the phosphorylation of phosphatidylinositol 3-phosphate on the fifth hydroxyl of the myo-inositol ring, to form phosphatidylinositol 3,5-bisphosphate. Required for endocytic-vacuolar pathway and nuclear migration. The product of the reaction, PI(3,5)P2 is an important regulator of vacuole homeostasis perhaps by controlling membrane flux to and/or from the vacuole. PI(3,5)P2 regulates the transition between trans-SNARE complex formation and vacuole membrane fusion. Hyperosmotic shock-induced increase in the levels of PtdIns(3,5)P2 requires the presence of VAC7, VAC14, and/or FIG4. The protein is 1-phosphatidylinositol 3-phosphate 5-kinase FAB1 of Saccharomyces cerevisiae (strain ATCC 204508 / S288c) (Baker's yeast).